Consider the following 328-residue polypeptide: MAPATAVVTPQTAFKTDLPVEKTAHNTVVKSEMGALSKAYPTYSLDESFSFAPIRESTVSRAMTRRYFSDLDKYAESDIVIVGAGSAGLTAAYYIGTRRPDLKIAIIEASVAPGGGAWLGGQLFSAMVVRKPADLFLNEIGVPYEDEGDYVVVKHAALFTSTVMARTLALPNVKLFNATAVEDLIVKEGKDGKQRIAGVVTNWTLVSLNHGLQSCMDPNTINAHLVVSATGHDGPFGAFCVKRLASAQLVSNLHDMRPLDMNRAEDLIVKGTREVFPGMIVGGMELSEFDGANRMGPTFGGMMFSGIKAAQEALAIFDERKAVNEKYL.

Substrate contacts are provided by residues A87, 108–109, G116, and V181; that span reads EA. A 2,3-didehydroalanine (Cys) modification is found at C215. Residues D217, H232, M284, and 294-296 contribute to the substrate site; that span reads RMG.

The protein belongs to the THI4 family. Homooctamer. Requires Fe cation as cofactor. Post-translationally, during the catalytic reaction, a sulfide is transferred from Cys-215 to a reaction intermediate, generating a dehydroalanine residue.

It is found in the cytoplasm. Its subcellular location is the nucleus. It carries out the reaction [ADP-thiazole synthase]-L-cysteine + glycine + NAD(+) = [ADP-thiazole synthase]-dehydroalanine + ADP-5-ethyl-4-methylthiazole-2-carboxylate + nicotinamide + 3 H2O + 2 H(+). Involved in biosynthesis of the thiamine precursor thiazole. Catalyzes the conversion of NAD and glycine to adenosine diphosphate 5-(2-hydroxyethyl)-4-methylthiazole-2-carboxylic acid (ADT), an adenylated thiazole intermediate. The reaction includes an iron-dependent sulfide transfer from a conserved cysteine residue of the protein to a thiazole intermediate. The enzyme can only undergo a single turnover, which suggests it is a suicide enzyme. May have additional roles in adaptation to various stress conditions and in DNA damage tolerance. This Schizosaccharomyces pombe (strain 972 / ATCC 24843) (Fission yeast) protein is Thiamine thiazole synthase (thi2).